Consider the following 228-residue polypeptide: U1 small nuclear ribonucleoprotein C (228 aa).

A Matrin-type zinc finger spans residues 4–36 (YYCEYCDIYLTHSSPVGRRQHVQGRKHISAKIE). A compositionally biased stretch (basic and acidic residues) spans 179–190 (LVKDNPNEERNG). Positions 179-228 (LVKDNPNEERNGDSAIANQPSTMHHEEDQDDPANATGGTANNNDNVSINA) are disordered. Residues 211–221 (ANATGGTANNN) are compositionally biased toward low complexity.

The protein belongs to the U1 small nuclear ribonucleoprotein C family. U1 snRNP is composed of the 7 core Sm proteins B/B', D1, D2, D3, E, F and G that assemble in a heptameric protein ring on the Sm site of the small nuclear RNA to form the core snRNP, and at least 3 U1 snRNP-specific proteins U1-70K, U1-A and U1-C. U1-C interacts with U1 snRNA and the 5' splice-site region of the pre-mRNA.

It localises to the nucleus. Component of the spliceosomal U1 snRNP, which is essential for recognition of the pre-mRNA 5' splice-site and the subsequent assembly of the spliceosome. U1-C is directly involved in initial 5' splice-site recognition for both constitutive and regulated alternative splicing. The interaction with the 5' splice-site seems to precede base-pairing between the pre-mRNA and the U1 snRNA. Stimulates commitment or early (E) complex formation by stabilizing the base pairing of the 5' end of the U1 snRNA and the 5' splice-site region. This is U1 small nuclear ribonucleoprotein C from Plasmodium knowlesi (strain H).